The following is a 196-amino-acid chain: uncharacterized protein (196 aa).

CBS domains lie at A10–E69 and M76–T132. An ACP-type MB domain is found at I153–R187. The Fe cation site is built by C158, C161, C177, and C180. Positions 158, 161, 177, and 180 each coordinate Zn(2+).

This is an uncharacterized protein from Methanopyrus kandleri (strain AV19 / DSM 6324 / JCM 9639 / NBRC 100938).